A 56-amino-acid chain; its full sequence is Large ribosomal subunit protein bL33 (56 aa).

It belongs to the bacterial ribosomal protein bL33 family.

The protein is Large ribosomal subunit protein bL33 of Rickettsia africae (strain ESF-5).